The following is a 99-amino-acid chain: Large ribosomal subunit protein bL21 (99 aa).

The protein belongs to the bacterial ribosomal protein bL21 family. In terms of assembly, part of the 50S ribosomal subunit. Contacts protein L20.

This protein binds to 23S rRNA in the presence of protein L20. The sequence is that of Large ribosomal subunit protein bL21 from Acholeplasma laidlawii (strain PG-8A).